Here is a 391-residue protein sequence, read N- to C-terminus: Pyruvate dehydrogenase E1 component subunit beta-3, chloroplastic (391 aa).

Residues methionine 1–valine 35 constitute a chloroplast transit peptide. Glutamate 127 lines the thiamine diphosphate pocket. The K(+) site is built by isoleucine 180, alanine 228, isoleucine 229, and asparagine 233.

In terms of assembly, tetramer of 2 alpha and 2 beta subunits. Thiamine diphosphate is required as a cofactor.

Its subcellular location is the plastid. The protein localises to the chloroplast. It catalyses the reaction N(6)-[(R)-lipoyl]-L-lysyl-[protein] + pyruvate + H(+) = N(6)-[(R)-S(8)-acetyldihydrolipoyl]-L-lysyl-[protein] + CO2. Functionally, the pyruvate dehydrogenase complex catalyzes the overall conversion of pyruvate to acetyl-CoA and CO(2). It contains multiple copies of three enzymatic components: pyruvate dehydrogenase (E1), dihydrolipoamide acetyltransferase (E2) and lipoamide dehydrogenase (E3). The sequence is that of Pyruvate dehydrogenase E1 component subunit beta-3, chloroplastic from Oryza sativa subsp. japonica (Rice).